The following is a 291-amino-acid chain: Small ribosomal subunit protein uS2 (291 aa).

The segment at 231 to 291 (NRGSGTTEAP…AAEAPAEDAK (61 aa)) is disordered. Over residues 246–259 (EWERELLEGSKAEE) the composition is skewed to basic and acidic residues. Residues 260-285 (AAAAAPAENAEAPAAPAAEAPAAAEA) show a composition bias toward low complexity.

It belongs to the universal ribosomal protein uS2 family.

The chain is Small ribosomal subunit protein uS2 from Pseudarthrobacter chlorophenolicus (strain ATCC 700700 / DSM 12829 / CIP 107037 / JCM 12360 / KCTC 9906 / NCIMB 13794 / A6) (Arthrobacter chlorophenolicus).